Here is a 326-residue protein sequence, read N- to C-terminus: uncharacterized protein (326 aa).

To B.subtilis XkdQ.

This is an uncharacterized protein from Bacillus subtilis (strain 168).